The primary structure comprises 302 residues: tRNA pseudouridine synthase B (302 aa).

Substrate is bound at residue His-40. Residue Asp-45 is the Nucleophile of the active site. Tyr-73, Tyr-178, and Leu-199 together coordinate substrate.

This sequence belongs to the pseudouridine synthase TruB family. Type 1 subfamily.

The catalysed reaction is uridine(55) in tRNA = pseudouridine(55) in tRNA. Functionally, responsible for synthesis of pseudouridine from uracil-55 in the psi GC loop of transfer RNAs. The protein is tRNA pseudouridine synthase B of Buchnera aphidicola subsp. Baizongia pistaciae (strain Bp).